A 210-amino-acid chain; its full sequence is Dephospho-CoA kinase (210 aa).

The region spanning tryptophan 4–lysine 202 is the DPCK domain. Glycine 12–alanine 17 is an ATP binding site.

The protein belongs to the CoaE family.

Its subcellular location is the cytoplasm. The enzyme catalyses 3'-dephospho-CoA + ATP = ADP + CoA + H(+). It participates in cofactor biosynthesis; coenzyme A biosynthesis; CoA from (R)-pantothenate: step 5/5. Catalyzes the phosphorylation of the 3'-hydroxyl group of dephosphocoenzyme A to form coenzyme A. The chain is Dephospho-CoA kinase from Neisseria meningitidis serogroup B (strain ATCC BAA-335 / MC58).